Here is a 130-residue protein sequence, read N- to C-terminus: Histone H2A.6 (130 aa).

Positions 1–12 are enriched in gly residues; that stretch reads MAGRGKTLGSGG. A disordered region spans residues 1 to 23; the sequence is MAGRGKTLGSGGAKKATSRSSKA.

The protein belongs to the histone H2A family. As to quaternary structure, the nucleosome is a histone octamer containing two molecules each of H2A, H2B, H3 and H4 assembled in one H3-H4 heterotetramer and two H2A-H2B heterodimers. The octamer wraps approximately 147 bp of DNA. Interacts with VIP1. Not ubiquitinated. As to expression, low level of expression, mainly in dividing tissues: floral buds, margins of newly emerging leaves, expanding leaves and the meristematic zone of root tips. Also expressed in many non-dividing cells of the elongation zone of the root.

The protein localises to the nucleus. The protein resides in the chromosome. Core component of nucleosome. Nucleosomes wrap and compact DNA into chromatin, limiting DNA accessibility to the cellular machineries which require DNA as a template. Histones thereby play a central role in transcription regulation, DNA repair, DNA replication and chromosomal stability. DNA accessibility is regulated via a complex set of post-translational modifications of histones, also called histone code, and nucleosome remodeling. Required for the T-DNA integration step of plant transformation by Agrobacterium. May play an important role in illegitimate recombination. The sequence is that of Histone H2A.6 (RAT5) from Arabidopsis thaliana (Mouse-ear cress).